Consider the following 414-residue polypeptide: Histidine--tRNA ligase (414 aa).

Belongs to the class-II aminoacyl-tRNA synthetase family. In terms of assembly, homodimer.

It is found in the cytoplasm. The catalysed reaction is tRNA(His) + L-histidine + ATP = L-histidyl-tRNA(His) + AMP + diphosphate + H(+). The chain is Histidine--tRNA ligase from Pelobacter propionicus (strain DSM 2379 / NBRC 103807 / OttBd1).